A 147-amino-acid chain; its full sequence is uncharacterized protein (147 aa).

Residues 29 to 147 (PYGNNSVHQG…GHHHGHHHKH (119 aa)) are disordered. 2 stretches are compositionally biased toward polar residues: residues 34–45 (SVHQGQPHTDQN) and 60–73 (PQAQYGNAGQNQPS). A compositionally biased stretch (gly residues) spans 75–92 (PFGGAGYTGPTAGTGFGN). The segment covering 122 to 147 (DGHHKKHGRKEHDHHHGHHHGHHHKH) has biased composition (basic residues).

This is an uncharacterized protein from Caenorhabditis elegans.